The following is a 1093-amino-acid chain: TATA element modulatory factor (1093 aa).

2 disordered regions span residues 38-80 (WAET…SPKA) and 108-189 (TIQK…DMKV). Polar residues predominate over residues 51 to 70 (SPVSGGWDTSTWGLKSNTEP). S72, S77, S112, and S136 each carry phosphoserine. Residues 123–137 (QRPEEEVKSSLHESL) are compositionally biased toward basic and acidic residues. The span at 139-158 (IGQSRTPETTESQVKDSSLC) shows a compositional bias: polar residues. The span at 173–187 (TEGKHEETVNKESDM) shows a compositional bias: basic and acidic residues. Phosphoserine is present on residues S199 and S217. Residues 229 to 238 (PKEQKHEDRQ) are compositionally biased toward basic and acidic residues. Disordered stretches follow at residues 229-260 (PKEQ…SDIE) and 266-285 (SVIS…SKSS). Low complexity predominate over residues 246 to 257 (VSTFSSGTSTTS). Phosphoserine is present on residues S328, S330, S333, S338, S344, S413, S542, S925, and S928. Residues 333–342 (SLDSRSVSEI) are interaction with Elongin BC complex. Residues 439 to 922 (EALSEKEDVC…QETIKEKERK (484 aa)) adopt a coiled-coil conformation. The interval 919 to 939 (KERKPFSVSSTPTMSRSSSIS) is disordered. The span at 925–939 (SVSSTPTMSRSSSIS) shows a compositional bias: low complexity. The residue at position 929 (T929) is a Phosphothreonine. S933 is subject to Phosphoserine. Positions 984-1092 (SIIENLQSQL…QIDELLRQSL (109 aa)) form a coiled coil.

Interacts with TRNP1; may regulate TRNP1 proteasomal degradation. Component of the SNF/SWI transcription factor complexes. Interacts with RAB6A. Interacts with STAT3 and FER. Interacts with TCEB1. In terms of processing, phosphorylated by FER.

The protein localises to the cytoplasm. The protein resides in the nucleus. It localises to the golgi apparatus membrane. Its function is as follows. Potential coactivator of the androgen receptor. Mediates STAT3 degradation. May play critical roles in two RAB6-dependent retrograde transport processes: one from endosomes to the Golgi and the other from the Golgi to the ER. This protein binds the HIV-1 TATA element and inhibits transcriptional activation by the TATA-binding protein (TBP). The polypeptide is TATA element modulatory factor (TMF1) (Homo sapiens (Human)).